A 623-amino-acid chain; its full sequence is tRNA 5-methylaminomethyl-2-thiouridine biosynthesis bifunctional protein MnmC (623 aa).

Positions 1 to 244 (MCVSSSIQTA…KREMLKAIWP (244 aa)) are tRNA (mnm(5)s(2)U34)-methyltransferase. The interval 268-623 (IGAGIAGLHC…VKIKKPYYSS (356 aa)) is FAD-dependent cmnm(5)s(2)U34 oxidoreductase.

This sequence in the N-terminal section; belongs to the methyltransferase superfamily. tRNA (mnm(5)s(2)U34)-methyltransferase family. The protein in the C-terminal section; belongs to the DAO family. Requires FAD as cofactor.

It localises to the cytoplasm. The catalysed reaction is 5-aminomethyl-2-thiouridine(34) in tRNA + S-adenosyl-L-methionine = 5-methylaminomethyl-2-thiouridine(34) in tRNA + S-adenosyl-L-homocysteine + H(+). Catalyzes the last two steps in the biosynthesis of 5-methylaminomethyl-2-thiouridine (mnm(5)s(2)U) at the wobble position (U34) in tRNA. Catalyzes the FAD-dependent demodification of cmnm(5)s(2)U34 to nm(5)s(2)U34, followed by the transfer of a methyl group from S-adenosyl-L-methionine to nm(5)s(2)U34, to form mnm(5)s(2)U34. This is tRNA 5-methylaminomethyl-2-thiouridine biosynthesis bifunctional protein MnmC from Acinetobacter baylyi (strain ATCC 33305 / BD413 / ADP1).